A 141-amino-acid polypeptide reads, in one-letter code: Hemoglobin subunit alpha-D (141 aa).

Residues 1–141 (VLTHEDCELL…VGDMLAEKYR (141 aa)) form the Globin domain. Heme b contacts are provided by His58 and His87.

It belongs to the globin family. There are three forms of hemoglobin in Sphenodon: A, A' and D. Hb A is a tetramer of two alpha-A and two beta-1, Hb A' is a tetramer of two alpha-a and two beta-2, Hb D is a tetramer of two alpha-D and two beta-2. As to expression, red blood cells.

Its function is as follows. Involved in oxygen transport from the lung to the various peripheral tissues. This Sphenodon punctatus (Tuatara) protein is Hemoglobin subunit alpha-D (HBAD).